The chain runs to 213 residues: Kynurenine formamidase (213 aa).

Trp15 provides a ligand contact to substrate. Positions 45, 49, and 51 each coordinate Zn(2+). Catalysis depends on His55, which acts as the Proton donor/acceptor. Residues His157 and Glu169 each contribute to the Zn(2+) site.

It belongs to the Cyclase 1 superfamily. KynB family. Homodimer. It depends on Zn(2+) as a cofactor.

The catalysed reaction is N-formyl-L-kynurenine + H2O = L-kynurenine + formate + H(+). Its pathway is amino-acid degradation; L-tryptophan degradation via kynurenine pathway; L-kynurenine from L-tryptophan: step 2/2. Its function is as follows. Catalyzes the hydrolysis of N-formyl-L-kynurenine to L-kynurenine, the second step in the kynurenine pathway of tryptophan degradation. The protein is Kynurenine formamidase of Deinococcus geothermalis (strain DSM 11300 / CIP 105573 / AG-3a).